A 24-amino-acid polypeptide reads, in one-letter code: Brevinin-1PTb (24 aa).

A disulfide bond links C18 and C24.

As to expression, expressed by the skin glands.

It localises to the secreted. Functionally, has antibacterial activity against the Gram-positive bacterium S.aureus ATCC 25923 and the Gram-negative bacterium E.coli ATCC 25726. This chain is Brevinin-1PTb, found in Pulchrana picturata (Malaysian fire frog).